The primary structure comprises 1306 residues: Kinesin-like protein KIN-14L (1306 aa).

One can recognise a Kinesin motor domain in the interval 142–456; sequence NVKVFCRSRP…LSFSARAKNA (315 aa). 223–230 lines the ATP pocket; it reads GQSRSGKT. Coiled-coil stretches lie at residues 466-507 and 540-595; these read IKKW…ANDQ and HRIE…ALNS. Composition is skewed to polar residues over residues 592-611 and 660-677; these read ALNSSDARSTIGSESASVIS and LGSSPQAPSPSNKQTNAQ. Disordered stretches follow at residues 592–627, 657–710, and 849–881; these read ALNSSDARSTIGSESASVISTPKMMESTADSSSVTK, KSGL…SGAI, and KSHTSRSRSSSRGSSPGRSPVHHHHDHGSRTSL. Over residues 855–867 the composition is skewed to low complexity; sequence SRSSSRGSSPGRS.

It belongs to the TRAFAC class myosin-kinesin ATPase superfamily. Kinesin family. KIN-14 subfamily.

The sequence is that of Kinesin-like protein KIN-14L from Oryza sativa subsp. japonica (Rice).